Here is a 346-residue protein sequence, read N- to C-terminus: N-acetyl-gamma-glutamyl-phosphate reductase (346 aa).

Residue Cys-150 is part of the active site.

It belongs to the NAGSA dehydrogenase family. Type 1 subfamily.

It is found in the cytoplasm. It carries out the reaction N-acetyl-L-glutamate 5-semialdehyde + phosphate + NADP(+) = N-acetyl-L-glutamyl 5-phosphate + NADPH + H(+). It functions in the pathway amino-acid biosynthesis; L-arginine biosynthesis; N(2)-acetyl-L-ornithine from L-glutamate: step 3/4. Catalyzes the NADPH-dependent reduction of N-acetyl-5-glutamyl phosphate to yield N-acetyl-L-glutamate 5-semialdehyde. The protein is N-acetyl-gamma-glutamyl-phosphate reductase of Desulforudis audaxviator (strain MP104C).